Here is a 130-residue protein sequence, read N- to C-terminus: Small ribosomal subunit protein uS17m (130 aa).

The transit peptide at Met1–Thr20 directs the protein to the mitochondrion.

Belongs to the universal ribosomal protein uS17 family. As to quaternary structure, component of the mitochondrial small ribosomal subunit (mt-SSU). Mature mammalian 55S mitochondrial ribosomes consist of a small (28S) and a large (39S) subunit. The 28S small subunit contains a 12S ribosomal RNA (12S mt-rRNA) and 30 different proteins. The 39S large subunit contains a 16S rRNA (16S mt-rRNA), a copy of mitochondrial valine transfer RNA (mt-tRNA(Val)), which plays an integral structural role, and 52 different proteins.

It localises to the mitochondrion. The sequence is that of Small ribosomal subunit protein uS17m (MRPS17) from Homo sapiens (Human).